Consider the following 69-residue polypeptide: NAD(P)H-quinone oxidoreductase subunit L (69 aa).

Transmembrane regions (helical) follow at residues leucine 5–phenylalanine 25 and glycine 40–leucine 60.

This sequence belongs to the complex I NdhL subunit family. In terms of assembly, NDH-1 can be composed of about 15 different subunits; different subcomplexes with different compositions have been identified which probably have different functions.

The protein localises to the cellular thylakoid membrane. The enzyme catalyses a plastoquinone + NADH + (n+1) H(+)(in) = a plastoquinol + NAD(+) + n H(+)(out). It catalyses the reaction a plastoquinone + NADPH + (n+1) H(+)(in) = a plastoquinol + NADP(+) + n H(+)(out). Functionally, NDH-1 shuttles electrons from an unknown electron donor, via FMN and iron-sulfur (Fe-S) centers, to quinones in the respiratory and/or the photosynthetic chain. The immediate electron acceptor for the enzyme in this species is believed to be plastoquinone. Couples the redox reaction to proton translocation, and thus conserves the redox energy in a proton gradient. Cyanobacterial NDH-1 also plays a role in inorganic carbon-concentration. This is NAD(P)H-quinone oxidoreductase subunit L from Acaryochloris marina (strain MBIC 11017).